Reading from the N-terminus, the 291-residue chain is MTTLAIDIGGTKLAAALIGADGQIRDRRELPTPASQTPEALRDALSALVSPLQAHAQRVAIASTGIIRDGSLLALNPHNLGGLLHFPLVKTLEQLTNLPTIAINDAQAAAWAEYQALEGDITDMVFITVSTGVGGGVVSGGKLLTGPGGLAGHIGHTLADPHGPVCGCGRTGCVEAIASGRGIAAAAQGELAGADARTIFTRAGQGDEQAQQLIHRSARTLARLIADIKATTDCQCVVVGGSVGLAEGYLALVEMYLAQEPAAFHVDLLAAHYRHDAGLLGAALLAQGEKL.

ATP contacts are provided by residues 5-12 (AIDIGGTK) and 132-139 (GVGGGVVS). Zn(2+)-binding residues include histidine 156, cysteine 166, cysteine 168, and cysteine 173.

The protein belongs to the ROK (NagC/XylR) family. NanK subfamily. As to quaternary structure, homodimer.

The enzyme catalyses an N-acyl-D-mannosamine + ATP = an N-acyl-D-mannosamine 6-phosphate + ADP + H(+). It functions in the pathway amino-sugar metabolism; N-acetylneuraminate degradation; D-fructose 6-phosphate from N-acetylneuraminate: step 2/5. Its function is as follows. Catalyzes the phosphorylation of N-acetylmannosamine (ManNAc) to ManNAc-6-P. This Escherichia coli (strain ATCC 8739 / DSM 1576 / NBRC 3972 / NCIMB 8545 / WDCM 00012 / Crooks) protein is N-acetylmannosamine kinase.